Here is a 30-residue protein sequence, read N- to C-terminus: Fibrinogen (30 aa).

As to quaternary structure, homodimer. As to expression, secreted into the hemolymph.

It is found in the secreted. The protein localises to the extracellular space. Functionally, clotting protein. This Panulirus interruptus (California spiny lobster) protein is Fibrinogen.